The primary structure comprises 365 residues: Histidine biosynthesis bifunctional protein HisB (365 aa).

Residues Met1–Pro176 are histidinol-phosphatase. The active-site Nucleophile is the Asp10. 2 residues coordinate Mg(2+): Asp10 and Asp12. The active-site Proton donor is Asp12. Cys93, His95, Cys101, and Cys103 together coordinate Zn(2+). Asp130 lines the Mg(2+) pocket. Residues Arg177 to Leu365 are imidazoleglycerol-phosphate dehydratase.

It in the N-terminal section; belongs to the histidinol-phosphatase family. The protein in the C-terminal section; belongs to the imidazoleglycerol-phosphate dehydratase family. Mg(2+) serves as cofactor. The cofactor is Zn(2+).

The protein resides in the cytoplasm. The catalysed reaction is D-erythro-1-(imidazol-4-yl)glycerol 3-phosphate = 3-(imidazol-4-yl)-2-oxopropyl phosphate + H2O. It carries out the reaction L-histidinol phosphate + H2O = L-histidinol + phosphate. It functions in the pathway amino-acid biosynthesis; L-histidine biosynthesis; L-histidine from 5-phospho-alpha-D-ribose 1-diphosphate: step 6/9. The protein operates within amino-acid biosynthesis; L-histidine biosynthesis; L-histidine from 5-phospho-alpha-D-ribose 1-diphosphate: step 8/9. This Mannheimia succiniciproducens (strain KCTC 0769BP / MBEL55E) protein is Histidine biosynthesis bifunctional protein HisB.